The sequence spans 245 residues: Phosphoadenosine 5'-phosphosulfate reductase (245 aa).

C239 acts as the Nucleophile; cysteine thiosulfonate intermediate in catalysis.

Belongs to the PAPS reductase family. CysH subfamily.

It localises to the cytoplasm. It catalyses the reaction [thioredoxin]-disulfide + sulfite + adenosine 3',5'-bisphosphate + 2 H(+) = [thioredoxin]-dithiol + 3'-phosphoadenylyl sulfate. The protein operates within sulfur metabolism; hydrogen sulfide biosynthesis; sulfite from sulfate: step 3/3. Its function is as follows. Catalyzes the formation of sulfite from phosphoadenosine 5'-phosphosulfate (PAPS) using thioredoxin as an electron donor. The chain is Phosphoadenosine 5'-phosphosulfate reductase from Alkalilimnicola ehrlichii (strain ATCC BAA-1101 / DSM 17681 / MLHE-1).